We begin with the raw amino-acid sequence, 80 residues long: Myrmicitoxin(1)-Pr1a (80 aa).

The signal sequence occupies residues 1–23 (MEIPKLLYIAVIAIGLSGSLTWA). Residues 24 to 57 (TPLANPLAEAEAEAKATAEATAEALAEALAEPEP) constitute a propeptide that is removed on maturation. Phenylalanine 79 bears the Phenylalanine amide mark.

Belongs to the formicidae venom clade 1 family. In terms of tissue distribution, expressed by the venom gland.

It is found in the secreted. Its function is as follows. Vertebrate-selective toxin that causes pain by targeting voltage-gated sodium channels. The protein is Myrmicitoxin(1)-Pr1a of Pogonomyrmex rugosus (Desert harvester ant).